The sequence spans 589 residues: Probable cytochrome P450 49a1 (589 aa).

The tract at residues 56 to 90 (TGESSNPKKLNVSQQPVTSVATTRTTASSLPAETT) is disordered. Positions 57–71 (GESSNPKKLNVSQQP) are enriched in polar residues. Residues 72–84 (VTSVATTRTTASS) are compositionally biased toward low complexity. C536 is a binding site for heme.

This sequence belongs to the cytochrome P450 family. Heme is required as a cofactor.

It is found in the endoplasmic reticulum membrane. The protein resides in the microsome membrane. Its function is as follows. May be involved in the metabolism of insect hormones and in the breakdown of synthetic insecticides. The chain is Probable cytochrome P450 49a1 (Cyp49a1) from Drosophila melanogaster (Fruit fly).